The following is a 163-amino-acid chain: Mating-type protein ALPHA2 (163 aa).

A DNA-binding region (homeobox; TALE-type) is located at residues 80-142 (IEKRSKRFPK…NRRRKERTLT (63 aa)).

This sequence belongs to the TALE/M-ATYP homeobox family.

It is found in the nucleus. Functionally, mating type proteins are sequence specific DNA-binding proteins that act as master switches in yeast differentiation by controlling gene expression in a cell type-specific fashion. The polypeptide is Mating-type protein ALPHA2 (MATALPHA2) (Pichia angusta (Yeast)).